We begin with the raw amino-acid sequence, 172 residues long: MIIYRDLISHDELFSDIYKIREIADGLCLEVEGKMVSRTEGAIDDSLIGGNASAEGPEGEGTESTVVTGVDIVMNHHLQETSFTKEAYKKYIKDYMKSLKGKLEEQKPERVKPFMTGAAEQIKHILANFNNYQFFIGENMNPDGMVALLDYREDGVTPFMIFFKDGLEMEKC.

The TCTP domain occupies 1 to 172; it reads MIIYRDLISH…FKDGLEMEKC (172 aa). Phosphoserine is present on residues serine 46 and serine 53. Serine 64 carries the post-translational modification Phosphoserine; by PLK1. Positions 70–172 are required for reduction of TSC22D1 protein stability; sequence VDIVMNHHLQ…FKDGLEMEKC (103 aa).

The protein belongs to the TCTP family. In terms of assembly, homodimer. Interacts with STEAP3. Interacts with TSC22D1; interaction results in the destabilization of TSC22D1 protein.

Its subcellular location is the cytoplasm. Involved in calcium binding and microtubule stabilization. Acts as a negative regulator of TSC22D1-mediated apoptosis, via interaction with and destabilization of TSC22D1 protein. The chain is Translationally-controlled tumor protein (Tpt1) from Mus musculus (Mouse).